Here is a 265-residue protein sequence, read N- to C-terminus: Tryptophan synthase alpha chain (265 aa).

Residues glutamate 48 and aspartate 59 each act as proton acceptor in the active site.

Belongs to the TrpA family. In terms of assembly, tetramer of two alpha and two beta chains.

The enzyme catalyses (1S,2R)-1-C-(indol-3-yl)glycerol 3-phosphate + L-serine = D-glyceraldehyde 3-phosphate + L-tryptophan + H2O. Its pathway is amino-acid biosynthesis; L-tryptophan biosynthesis; L-tryptophan from chorismate: step 5/5. Its function is as follows. The alpha subunit is responsible for the aldol cleavage of indoleglycerol phosphate to indole and glyceraldehyde 3-phosphate. The chain is Tryptophan synthase alpha chain from Pelagibacter ubique (strain HTCC1062).